The chain runs to 488 residues: Cysteine--tRNA ligase (488 aa).

Cys-28 is a Zn(2+) binding site. The short motif at 30 to 40 is the 'HIGH' region element; it reads PTVYDDAHLGH. Zn(2+)-binding residues include Cys-209, His-239, and Glu-243. The 'KMSKS' region motif lies at 271-275; it reads KMSKS. Position 274 (Lys-274) interacts with ATP.

It belongs to the class-I aminoacyl-tRNA synthetase family. In terms of assembly, monomer. Zn(2+) serves as cofactor.

The protein localises to the cytoplasm. The enzyme catalyses tRNA(Cys) + L-cysteine + ATP = L-cysteinyl-tRNA(Cys) + AMP + diphosphate. The sequence is that of Cysteine--tRNA ligase from Helicobacter hepaticus (strain ATCC 51449 / 3B1).